The following is a 1602-amino-acid chain: Mediator of RNA polymerase II transcription subunit 26 (1602 aa).

A TFIIS N-terminal domain is found at 8 to 85 (QLTSHLSQAL…KMWREMVGIQ (78 aa)). 5 disordered regions span residues 86–108 (QTAN…PSAH), 238–298 (VTDS…AQNE), 399–481 (EDSI…KGVD), 580–617 (FSNK…SLDS), and 694–736 (SDNG…MDTP). Over residues 273–285 (RPKKFKKDKKHKE) the composition is skewed to basic residues. Residues 401-414 (SITNDSSTSCSRLS) are compositionally biased toward polar residues. Positions 418–431 (VEERRKSDKIDDSI) are enriched in basic and acidic residues. Over residues 467 to 477 (VPKKRGRKKGS) the composition is skewed to basic residues. Residues 587-604 (AGNTDSDTITSEPSQDSN) show a composition bias toward polar residues. A compositionally biased stretch (basic and acidic residues) spans 715–728 (KQEEQLPKLERLSD). Residues 792–820 (LDVASVNADTVQNQINSHNQEGETSEEQN) adopt a coiled-coil conformation. 2 disordered regions span residues 1035-1158 (FEET…EVEN) and 1372-1407 (NTSA…NESD). The span at 1056–1070 (SSSSNSSCSNSSNSS) shows a compositional bias: low complexity. Residues 1073-1083 (KTQDSINEKLR) show a composition bias toward basic and acidic residues. Positions 1101 to 1112 (RKRRGKNRKKRN) are enriched in basic residues. The span at 1124–1143 (ISLNGTISNLSSSNNSSSSE) shows a compositional bias: low complexity. Residues 1144–1158 (SETETGLENENEVEN) are compositionally biased toward acidic residues. Positions 1378–1388 (TVSEDPLKIEE) are enriched in basic and acidic residues.

The protein belongs to the Mediator complex subunit 26 family. In terms of assembly, component of the Mediator complex.

The protein localises to the nucleus. In terms of biological role, component of the Mediator complex, a coactivator involved in the regulated transcription of nearly all RNA polymerase II-dependent genes. Mediator functions as a bridge to convey information from gene-specific regulatory proteins to the basal RNA polymerase II transcription machinery. Mediator is recruited to promoters by direct interactions with regulatory proteins and serves as a scaffold for the assembly of a functional preinitiation complex with RNA polymerase II and the general transcription factors. In Drosophila pseudoobscura pseudoobscura (Fruit fly), this protein is Mediator of RNA polymerase II transcription subunit 26 (MED26).